The following is a 198-amino-acid chain: uncharacterized protein (198 aa).

The protein localises to the plastid. Its subcellular location is the chloroplast. This is an uncharacterized protein from Antithamnion sp. (Red alga).